The sequence spans 288 residues: 33 kDa chaperonin (288 aa).

Disulfide bonds link C237–C239 and C270–C273.

It belongs to the HSP33 family. Post-translationally, under oxidizing conditions two disulfide bonds are formed involving the reactive cysteines. Under reducing conditions zinc is bound to the reactive cysteines and the protein is inactive.

The protein resides in the cytoplasm. In terms of biological role, redox regulated molecular chaperone. Protects both thermally unfolding and oxidatively damaged proteins from irreversible aggregation. Plays an important role in the bacterial defense system toward oxidative stress. This is 33 kDa chaperonin from Agathobacter rectalis (strain ATCC 33656 / DSM 3377 / JCM 17463 / KCTC 5835 / VPI 0990) (Eubacterium rectale).